Here is a 376-residue protein sequence, read N- to C-terminus: uncharacterized protein (376 aa).

The next 2 helical transmembrane spans lie at 153–173 (QGTL…VLFA) and 188–208 (HRPF…LAVY).

The protein localises to the membrane. This is an uncharacterized protein from Saccharomyces cerevisiae (strain ATCC 204508 / S288c) (Baker's yeast).